A 208-amino-acid polypeptide reads, in one-letter code: Thymidylate kinase (208 aa).

10–17 (GPEGSGKT) serves as a coordination point for ATP.

Belongs to the thymidylate kinase family.

The enzyme catalyses dTMP + ATP = dTDP + ADP. Phosphorylation of dTMP to form dTDP in both de novo and salvage pathways of dTTP synthesis. The protein is Thymidylate kinase of Bacillus mycoides (strain KBAB4) (Bacillus weihenstephanensis).